A 177-amino-acid polypeptide reads, in one-letter code: RNA pyrophosphohydrolase (177 aa).

Residues G6–K149 form the Nudix hydrolase domain. The short motif at G38–G59 is the Nudix box element.

This sequence belongs to the Nudix hydrolase family. RppH subfamily. It depends on a divalent metal cation as a cofactor.

In terms of biological role, accelerates the degradation of transcripts by removing pyrophosphate from the 5'-end of triphosphorylated RNA, leading to a more labile monophosphorylated state that can stimulate subsequent ribonuclease cleavage. This Pectobacterium carotovorum subsp. carotovorum (strain PC1) protein is RNA pyrophosphohydrolase.